A 278-amino-acid polypeptide reads, in one-letter code: MHRYVVIDAFASEPLQGNPVAVFFDCDDLSGERMQRMAREMNLSESTFVLRPQQDGDARIRIFTPVNELPFAGHPLLGTAIALGAETDKDRLFLETRMGTVPFALERQDGKVVACSMQQPIPTWEHFSRPAELLAALGLKGSTFPIEVYRNGPRHVFVGLESVAALSALHPDHRALCDFPDLAVNCFAGAGRHWRSRMFSPAYGVVEDAATGSAAGPLAIHLARHRQIPYGQQIEILQGVEIGRPSRMYARAEGAGERVSAVEVSGNGAAFAEGRAYL.

Residue Glu-45 is part of the active site.

Belongs to the PhzF family.

The catalysed reaction is (5S,6S)-6-amino-5-hydroxycyclohexa-1,3-diene-1-carboxyate = (1R,6S)-6-amino-5-oxocyclohex-2-ene-1-carboxylate. It participates in secondary metabolite biosynthesis; pyocyanine biosynthesis. In terms of biological role, isomerase that catalyzes the condensation of two molecules of trans-2,3-dihydro-3-hydroxyanthranilic acid (DHHA) into the phenazine ring system. The final product is not yet known. The protein is Trans-2,3-dihydro-3-hydroxyanthranilate isomerase (phzF1) of Pseudomonas aeruginosa (strain ATCC 15692 / DSM 22644 / CIP 104116 / JCM 14847 / LMG 12228 / 1C / PRS 101 / PAO1).